The following is a 340-amino-acid chain: Methane monooxygenase component C (340 aa).

The 92-residue stretch at 1–92 folds into the 2Fe-2S ferredoxin-type domain; the sequence is MYQIVIETED…DLHLLVPYTY (92 aa). Residues cysteine 37, cysteine 41, cysteine 44, and cysteine 76 each coordinate [2Fe-2S] cluster. An FAD-binding FR-type domain is found at 101 to 205; sequence QTNWLAEILA…RGPAGSFFLH (105 aa). 215-229 lines the FAD pocket; it reads VAGGTGLSPVLSMIR.

In terms of assembly, the soluble methane monooxygenase (sMMO) consists of four components A/MMOH (composed of alpha/MmoX, beta/MmoY and gamma/MmoZ), B/MMOB (MmoB), C/MMOR (MmoC) and D/MMOD (MmoD). [2Fe-2S] cluster serves as cofactor.

It carries out the reaction methane + NADH + O2 + H(+) = methanol + NAD(+) + H2O. It catalyses the reaction methane + NADPH + O2 + H(+) = methanol + NADP(+) + H2O. In terms of biological role, responsible for the initial oxygenation of methane to methanol in methanotrophs. It also catalyzes the monohydroxylation of a variety of unactivated alkenes, alicyclic, aromatic and heterocyclic compounds. The component C is the iron-sulfur flavoprotein of sMMO. The polypeptide is Methane monooxygenase component C (mmoC) (Methylosinus trichosporium).